A 278-amino-acid polypeptide reads, in one-letter code: Thiazole synthase (278 aa).

Catalysis depends on Lys109, which acts as the Schiff-base intermediate with DXP. Residues Gly170, 197 to 198 (AG), and 219 to 220 (NT) contribute to the 1-deoxy-D-xylulose 5-phosphate site.

This sequence belongs to the ThiG family. Homotetramer. Forms heterodimers with either ThiH or ThiS.

It is found in the cytoplasm. The catalysed reaction is [ThiS sulfur-carrier protein]-C-terminal-Gly-aminoethanethioate + 2-iminoacetate + 1-deoxy-D-xylulose 5-phosphate = [ThiS sulfur-carrier protein]-C-terminal Gly-Gly + 2-[(2R,5Z)-2-carboxy-4-methylthiazol-5(2H)-ylidene]ethyl phosphate + 2 H2O + H(+). It participates in cofactor biosynthesis; thiamine diphosphate biosynthesis. Its function is as follows. Catalyzes the rearrangement of 1-deoxy-D-xylulose 5-phosphate (DXP) to produce the thiazole phosphate moiety of thiamine. Sulfur is provided by the thiocarboxylate moiety of the carrier protein ThiS. In vitro, sulfur can be provided by H(2)S. In Cupriavidus taiwanensis (strain DSM 17343 / BCRC 17206 / CCUG 44338 / CIP 107171 / LMG 19424 / R1) (Ralstonia taiwanensis (strain LMG 19424)), this protein is Thiazole synthase.